The following is an 834-amino-acid chain: U-box domain-containing protein 33 (834 aa).

Residues 232-308 form a disordered region; it reads FSTPESEHQH…SPSSFPDGVD (77 aa). Composition is skewed to polar residues over residues 243–273 and 284–293; these read SRVQ…GSLN and SEVTGSATVM. Residues 334–462 adopt a coiled-coil conformation; it reads LRRQKAEKNA…SHAETSTLQL (129 aa). A Protein kinase domain is found at 481–744; sequence FDSTLKIGEG…EVWRVLEPMR (264 aa). ATP-binding positions include 487 to 495 and lysine 508; that span reads IGEGGYGSI. Aspartate 603 serves as the catalytic Proton acceptor. In terms of domain architecture, U-box spans 762–834; it reads IAPPYFICPI…AIQEWLQHHL (73 aa).

This sequence belongs to the protein kinase superfamily. Ser/Thr protein kinase family.

The enzyme catalyses L-seryl-[protein] + ATP = O-phospho-L-seryl-[protein] + ADP + H(+). It carries out the reaction L-threonyl-[protein] + ATP = O-phospho-L-threonyl-[protein] + ADP + H(+). It catalyses the reaction S-ubiquitinyl-[E2 ubiquitin-conjugating enzyme]-L-cysteine + [acceptor protein]-L-lysine = [E2 ubiquitin-conjugating enzyme]-L-cysteine + N(6)-ubiquitinyl-[acceptor protein]-L-lysine.. It functions in the pathway protein modification; protein ubiquitination. Functionally, functions as an E3 ubiquitin ligase. This is U-box domain-containing protein 33 (PUB33) from Arabidopsis thaliana (Mouse-ear cress).